Consider the following 403-residue polypeptide: Tripartite motif-containing protein 59 (403 aa).

The RING-type zinc finger occupies 10-60 (CPICYSIFEDPRVLPCSHTFCRNCLENVLQASGNFYIWRPLRIPLKCPNCR). A B box-type zinc finger spans residues 92 to 134 (PDVVTCPEHYRQPLNVYCLLDKKLVCGHCLTIGQHHGHPIDDL). Positions 97, 100, 120, and 126 each coordinate Zn(2+). Residues 163 to 246 (LIEKLEEQKC…TITTSLQDES (84 aa)) adopt a coiled-coil conformation. The chain crosses the membrane as a helical span at residues 329 to 349 (ILNIAIVSLISVILMLILLFN).

Belongs to the TRIM/RBCC family. In terms of assembly, interacts with ECSIT. As to expression, moderately expressed in the spleen, brain and heart and very highly expressed in the testis.

The protein resides in the endoplasmic reticulum membrane. The enzyme catalyses S-ubiquitinyl-[E2 ubiquitin-conjugating enzyme]-L-cysteine + [acceptor protein]-L-lysine = [E2 ubiquitin-conjugating enzyme]-L-cysteine + N(6)-ubiquitinyl-[acceptor protein]-L-lysine.. It functions in the pathway protein modification; protein ubiquitination. Functionally, E3 ubiquitin ligase involved in different processes such as development and immune response. Serves as a negative regulator for innate immune signaling pathways by suppressing RLR-induced activation of IRF3/7 and NF-kappa-B via interaction with adapter ECSIT. Regulates autophagy through modulating both the transcription and the ubiquitination of BECN1. On the one hand, regulates the transcription of BECN1 through negatively modulating the NF-kappa-B pathway. On the other hand, regulates TRAF6-mediated 'Lys-63'-linked ubiquitination of BECN1, thus affecting the formation of the BECN1-PIK3C3 complex. In addition, mediates 'Lys-48'-linked ubiquitination of TRAF6 and thereby promotes TRAF6 proteasomal degradation. Also acts as a critical regulator for early embryo development from blastocyst stage to gastrula through modulating F-actin assembly and WASH1 'Lys-63'-linked ubiquitination. This Mus musculus (Mouse) protein is Tripartite motif-containing protein 59 (Trim59).